Here is a 394-residue protein sequence, read N- to C-terminus: Elongation factor Tu (394 aa).

One can recognise a tr-type G domain in the interval 10-204 (KPHVNIGTIG…AVDSYIPQPV (195 aa)). Residues 19–26 (GHVDHGKT) are G1. 19-26 (GHVDHGKT) lines the GTP pocket. A Mg(2+)-binding site is contributed by Thr26. The segment at 60-64 (GITIS) is G2. The G3 stretch occupies residues 81–84 (DCPG). Residues 81 to 85 (DCPGH) and 136 to 139 (NKVD) each bind GTP. Positions 136–139 (NKVD) are G4. The interval 174–176 (SAL) is G5.

This sequence belongs to the TRAFAC class translation factor GTPase superfamily. Classic translation factor GTPase family. EF-Tu/EF-1A subfamily. In terms of assembly, monomer.

It localises to the cytoplasm. The catalysed reaction is GTP + H2O = GDP + phosphate + H(+). In terms of biological role, GTP hydrolase that promotes the GTP-dependent binding of aminoacyl-tRNA to the A-site of ribosomes during protein biosynthesis. This chain is Elongation factor Tu, found in Rickettsia montanensis.